Here is a 171-residue protein sequence, read N- to C-terminus: ATP synthase subunit b (171 aa).

Residues 12-34 (FGLNLNLFETNVINLAVVIFGLY) traverse the membrane as a helical segment.

This sequence belongs to the ATPase B chain family. In terms of assembly, F-type ATPases have 2 components, F(1) - the catalytic core - and F(0) - the membrane proton channel. F(1) has five subunits: alpha(3), beta(3), gamma(1), delta(1), epsilon(1). F(0) has four main subunits: a(1), b(1), b'(1) and c(10-14). The alpha and beta chains form an alternating ring which encloses part of the gamma chain. F(1) is attached to F(0) by a central stalk formed by the gamma and epsilon chains, while a peripheral stalk is formed by the delta, b and b' chains.

The protein localises to the cellular thylakoid membrane. F(1)F(0) ATP synthase produces ATP from ADP in the presence of a proton or sodium gradient. F-type ATPases consist of two structural domains, F(1) containing the extramembraneous catalytic core and F(0) containing the membrane proton channel, linked together by a central stalk and a peripheral stalk. During catalysis, ATP synthesis in the catalytic domain of F(1) is coupled via a rotary mechanism of the central stalk subunits to proton translocation. Functionally, component of the F(0) channel, it forms part of the peripheral stalk, linking F(1) to F(0). This is ATP synthase subunit b from Prochlorococcus marinus (strain MIT 9211).